Reading from the N-terminus, the 494-residue chain is Aspartyl/glutamyl-tRNA(Asn/Gln) amidotransferase subunit B (494 aa).

This sequence belongs to the GatB/GatE family. GatB subfamily. Heterotrimer of A, B and C subunits.

The catalysed reaction is L-glutamyl-tRNA(Gln) + L-glutamine + ATP + H2O = L-glutaminyl-tRNA(Gln) + L-glutamate + ADP + phosphate + H(+). It carries out the reaction L-aspartyl-tRNA(Asn) + L-glutamine + ATP + H2O = L-asparaginyl-tRNA(Asn) + L-glutamate + ADP + phosphate + 2 H(+). In terms of biological role, allows the formation of correctly charged Asn-tRNA(Asn) or Gln-tRNA(Gln) through the transamidation of misacylated Asp-tRNA(Asn) or Glu-tRNA(Gln) in organisms which lack either or both of asparaginyl-tRNA or glutaminyl-tRNA synthetases. The reaction takes place in the presence of glutamine and ATP through an activated phospho-Asp-tRNA(Asn) or phospho-Glu-tRNA(Gln). The polypeptide is Aspartyl/glutamyl-tRNA(Asn/Gln) amidotransferase subunit B (Synechococcus sp. (strain ATCC 27144 / PCC 6301 / SAUG 1402/1) (Anacystis nidulans)).